The chain runs to 95 residues: Protein TusB (95 aa).

Belongs to the DsrH/TusB family. As to quaternary structure, heterohexamer, formed by a dimer of trimers. The hexameric TusBCD complex contains 2 copies each of TusB, TusC and TusD. The TusBCD complex interacts with TusE.

It localises to the cytoplasm. Part of a sulfur-relay system required for 2-thiolation of 5-methylaminomethyl-2-thiouridine (mnm(5)s(2)U) at tRNA wobble positions. In Klebsiella pneumoniae (strain 342), this protein is Protein TusB.